Consider the following 356-residue polypeptide: Probable dual-specificity RNA methyltransferase RlmN (356 aa).

Residue glutamate 97 is the Proton acceptor of the active site. Residues 103–333 (YHHGNSVCIS…VTIRREMGSD (231 aa)) form the Radical SAM core domain. Cysteines 110 and 338 form a disulfide. 3 residues coordinate [4Fe-4S] cluster: cysteine 117, cysteine 121, and cysteine 124. S-adenosyl-L-methionine contacts are provided by residues 164-165 (GE), serine 196, 219-221 (SLH), and asparagine 295. The active-site S-methylcysteine intermediate is the cysteine 338.

Belongs to the radical SAM superfamily. RlmN family. The cofactor is [4Fe-4S] cluster.

It localises to the cytoplasm. It catalyses the reaction adenosine(2503) in 23S rRNA + 2 reduced [2Fe-2S]-[ferredoxin] + 2 S-adenosyl-L-methionine = 2-methyladenosine(2503) in 23S rRNA + 5'-deoxyadenosine + L-methionine + 2 oxidized [2Fe-2S]-[ferredoxin] + S-adenosyl-L-homocysteine. It carries out the reaction adenosine(37) in tRNA + 2 reduced [2Fe-2S]-[ferredoxin] + 2 S-adenosyl-L-methionine = 2-methyladenosine(37) in tRNA + 5'-deoxyadenosine + L-methionine + 2 oxidized [2Fe-2S]-[ferredoxin] + S-adenosyl-L-homocysteine. In terms of biological role, specifically methylates position 2 of adenine 2503 in 23S rRNA and position 2 of adenine 37 in tRNAs. The sequence is that of Probable dual-specificity RNA methyltransferase RlmN from Lachnoclostridium phytofermentans (strain ATCC 700394 / DSM 18823 / ISDg) (Clostridium phytofermentans).